A 150-amino-acid polypeptide reads, in one-letter code: Anti-sigma F factor (150 aa).

It belongs to the anti-sigma-factor family.

The enzyme catalyses L-seryl-[protein] + ATP = O-phospho-L-seryl-[protein] + ADP + H(+). The catalysed reaction is L-threonyl-[protein] + ATP = O-phospho-L-threonyl-[protein] + ADP + H(+). Functionally, binds to sigma F and blocks its ability to form an RNA polymerase holoenzyme (E-sigma F). Phosphorylates SpoIIAA on a serine residue. This phosphorylation may enable SpoIIAA to act as an anti-anti-sigma factor that counteracts SpoIIAB and thus releases sigma F from inhibition. This chain is Anti-sigma F factor, found in Pasteuria penetrans.